We begin with the raw amino-acid sequence, 90 residues long: Small ribosomal subunit protein bS6 (90 aa).

Lys33 is covalently cross-linked (Isoglutamyl lysine isopeptide (Lys-Gln) (interchain with Q-Cter in protein Pup)).

It belongs to the bacterial ribosomal protein bS6 family.

Its function is as follows. Binds together with bS18 to 16S ribosomal RNA. The chain is Small ribosomal subunit protein bS6 (rpsF) from Mycolicibacterium smegmatis (strain ATCC 700084 / mc(2)155) (Mycobacterium smegmatis).